The sequence spans 86 residues: Sodium channel neurotoxin MeuNaTxalpha-4 (86 aa).

The N-terminal stretch at 1 to 19 is a signal peptide; sequence MNYLILISFALLVITGVES. In terms of domain architecture, LCN-type CS-alpha/beta spans 21 to 85; it reads RDAYIAKPHN…VPIRIPGKCH (65 aa). Cystine bridges form between cysteine 31–cysteine 84, cysteine 35–cysteine 57, cysteine 43–cysteine 67, and cysteine 47–cysteine 69. A propeptide (removed by a carboxypeptidase) is located at residue arginine 86.

This sequence belongs to the long (4 C-C) scorpion toxin superfamily. Sodium channel inhibitor family. Alpha subfamily. Expressed by the venom gland.

The protein resides in the secreted. Its function is as follows. Alpha toxins bind voltage-independently at site-3 of sodium channels (Nav) and inhibit the inactivation of the activated channels, thereby blocking neuronal transmission. This toxin inhibits inactivation of drosophila DmNav1 (EC(50)=130 nM). In Mesobuthus eupeus (Lesser Asian scorpion), this protein is Sodium channel neurotoxin MeuNaTxalpha-4.